Reading from the N-terminus, the 171-residue chain is NRR repressor homolog 2 (171 aa).

The segment covering 1-12 (MEARLSTGEKTK) has biased composition (basic and acidic residues). 3 disordered regions span residues 1-45 (MEAR…QQQM), 65-94 (AALPSCREDDVSGGGGGEQRQKRPRAAPWR), and 119-143 (TTKGQDGNCKKGKRSEANAAAEEDK). Residues 26-43 (PEEETAAETTTSEEEEQQ) show a composition bias toward acidic residues.

It belongs to the NPR1-interactor family. As to quaternary structure, interacts with NPR1/NH1. Interacts with NPR3/NH3.

It localises to the nucleus. In terms of biological role, binds to and weakly represses NPR1/NH1-mediated transcriptional activation of LG2 in vitro. This Oryza sativa subsp. japonica (Rice) protein is NRR repressor homolog 2.